We begin with the raw amino-acid sequence, 340 residues long: MTMSLIAGVAAFVLTVLAMPHFITYYKIKKIGGQQMHEDVKQHLAKAGTPTMGGTVFLVVAILISLIFNFHVFTEGHQAYGATAGILFVILIYGIIGFLDDFLKIFHQINEGLKPWQKMALQIVAGLLFYFIHVLPSGTNSLAIGGLTIQLGVFYVLFVLFWIVGFSNAVNLTDGIDGLASVSVVISLIAYGIIAFVKGELAILTIIITMIGALLGFFVFNHKPAKVFMGDVGSLSLGAMLAVISIALRVEWTLLLIGVVYVLETASVMLQVSYFKYTKRKYGEGRRIFRMTPFHHHLELGGISGKGEKWSEWKVDAFLWTIGALASSITLWMVLGNVMK.

10 consecutive transmembrane segments (helical) span residues 3-23 (MSLI…PHFI), 53-73 (GGTV…FHVF), 79-99 (AYGA…IGFL), 119-139 (MALQ…PSGT), 144-164 (IGGL…FWIV), 176-196 (IDGL…IIAF), 200-220 (ELAI…FFVF), 227-247 (VFMG…ISIA), 250-270 (VEWT…SVML), and 315-335 (VDAF…WMVL).

The protein belongs to the glycosyltransferase 4 family. MraY subfamily. Mg(2+) serves as cofactor.

Its subcellular location is the cell membrane. It catalyses the reaction UDP-N-acetyl-alpha-D-muramoyl-L-alanyl-gamma-D-glutamyl-L-lysyl-D-alanyl-D-alanine + di-trans,octa-cis-undecaprenyl phosphate = Mur2Ac(oyl-L-Ala-gamma-D-Glu-L-Lys-D-Ala-D-Ala)-di-trans,octa-cis-undecaprenyl diphosphate + UMP. It functions in the pathway cell wall biogenesis; peptidoglycan biosynthesis. Its function is as follows. Catalyzes the initial step of the lipid cycle reactions in the biosynthesis of the cell wall peptidoglycan: transfers peptidoglycan precursor phospho-MurNAc-pentapeptide from UDP-MurNAc-pentapeptide onto the lipid carrier undecaprenyl phosphate, yielding undecaprenyl-pyrophosphoryl-MurNAc-pentapeptide, known as lipid I. In Streptococcus thermophilus (strain CNRZ 1066), this protein is Phospho-N-acetylmuramoyl-pentapeptide-transferase.